The sequence spans 138 residues: Transcriptional activator protein (138 aa).

Positions 1-20 are enriched in low complexity; it reads MTGSKKTPSTSPSKKLSSPP. A disordered region spans residues 1–23; it reads MTGSKKTPSTSPSKKLSSPPEVK. The Nuclear localization signal motif lies at 23 to 37; that stretch reads KLRHRFAKRQIRRRR. A zinc finger spans residues 42–59; that stretch reads CGCSIYIHINCVNNGFTH. Residues 85–106 are compositionally biased toward polar residues; it reads NTASGDANVHTQPGISHSSQSK. A disordered region spans residues 85–123; the sequence is NTASGDANVHTQPGISHSSQSKPQHEDSVGSPQSLLQLP. Low complexity predominate over residues 113–123; that stretch reads VGSPQSLLQLP. The interval 124–138 is transactivation; that stretch reads SLDDVDDDFWADLLK.

It belongs to the geminiviridae transcriptional activator protein family. Monomer. Homodimer. Homooligomer. Self-interaction correlates with nuclear localization and efficient activation of transcription. Monomers suppress local silencing by interacting with and inactivating host adenosine kinase 2 (ADK2) in the cytoplasm. Interacts with and inhibits host SNF1 kinase. Binds to ssDNA. Post-translationally, phosphorylated.

Its subcellular location is the host nucleus. The protein resides in the host cytoplasm. Its function is as follows. Strong activator of the late viral genes promoters. Enhances the expression of the capsid protein and nuclear shuttle protein. Acts as a suppressor of RNA-mediated gene silencing, also known as post-transcriptional gene silencing (PTGS), a mechanism of plant viral defense that limits the accumulation of viral RNAs. Suppresses the host RNA silencing by inhibiting adenosine kinase 2 (ADK2), a kinase involved in a general methylation pathway. Also suppresses the host basal defense by interacting with and inhibiting SNF1 kinase, a key regulator of cell metabolism implicated in innate antiviral defense. Determines pathogenicity. This is Transcriptional activator protein from Pepper huasteco yellow vein virus (PHYVV).